The chain runs to 429 residues: Serine hydroxymethyltransferase (429 aa).

(6S)-5,6,7,8-tetrahydrofolate is bound by residues L126 and 130–132 (GHL). K235 is modified (N6-(pyridoxal phosphate)lysine). 359 to 361 (SPF) serves as a coordination point for (6S)-5,6,7,8-tetrahydrofolate.

It belongs to the SHMT family. In terms of assembly, homodimer. The cofactor is pyridoxal 5'-phosphate.

It is found in the cytoplasm. It catalyses the reaction (6R)-5,10-methylene-5,6,7,8-tetrahydrofolate + glycine + H2O = (6S)-5,6,7,8-tetrahydrofolate + L-serine. Its pathway is one-carbon metabolism; tetrahydrofolate interconversion. It functions in the pathway amino-acid biosynthesis; glycine biosynthesis; glycine from L-serine: step 1/1. In terms of biological role, catalyzes the reversible interconversion of serine and glycine with tetrahydrofolate (THF) serving as the one-carbon carrier. This reaction serves as the major source of one-carbon groups required for the biosynthesis of purines, thymidylate, methionine, and other important biomolecules. Also exhibits THF-independent aldolase activity toward beta-hydroxyamino acids, producing glycine and aldehydes, via a retro-aldol mechanism. This Synechococcus sp. (strain CC9902) protein is Serine hydroxymethyltransferase.